We begin with the raw amino-acid sequence, 591 residues long: Aspartate--tRNA(Asp/Asn) ligase (591 aa).

Glu-175 contributes to the L-aspartate binding site. The aspartate stretch occupies residues 199 to 202 (QQFK). L-aspartate-binding residues include Arg-221 and His-453. 221-223 (RDE) lines the ATP pocket. Glu-486 is a binding site for ATP. Position 493 (Arg-493) interacts with L-aspartate. Residue 538 to 541 (GIDR) participates in ATP binding.

This sequence belongs to the class-II aminoacyl-tRNA synthetase family. Type 1 subfamily. Homodimer.

It localises to the cytoplasm. It catalyses the reaction tRNA(Asx) + L-aspartate + ATP = L-aspartyl-tRNA(Asx) + AMP + diphosphate. In terms of biological role, aspartyl-tRNA synthetase with relaxed tRNA specificity since it is able to aspartylate not only its cognate tRNA(Asp) but also tRNA(Asn). Reaction proceeds in two steps: L-aspartate is first activated by ATP to form Asp-AMP and then transferred to the acceptor end of tRNA(Asp/Asn). In Cereibacter sphaeroides (strain ATCC 17029 / ATH 2.4.9) (Rhodobacter sphaeroides), this protein is Aspartate--tRNA(Asp/Asn) ligase.